Here is a 345-residue protein sequence, read N- to C-terminus: Ferrochelatase (345 aa).

Residues His-215 and Glu-296 each contribute to the Fe cation site.

This sequence belongs to the ferrochelatase family.

Its subcellular location is the cytoplasm. It carries out the reaction heme b + 2 H(+) = protoporphyrin IX + Fe(2+). The protein operates within porphyrin-containing compound metabolism; protoheme biosynthesis; protoheme from protoporphyrin-IX: step 1/1. Functionally, catalyzes the ferrous insertion into protoporphyrin IX. This chain is Ferrochelatase, found in Rhodopseudomonas palustris (strain TIE-1).